The sequence spans 261 residues: MPLKVDLNADMGESFGAYKLGLDRELLNLVTSANIACGFHAGDYMVMQKTVNMAASKNVAVGAHPGFPDLQGFGRRNMQLSPEEVRNLVIYQIGALQPFARAEGTELKHVKPHGALYNMAAVNYELAKAIAEAVKKTVPDAILLALANSEMVKAANDVGIRVTQEVFADRAYNEDGTLVPRSMPGAVIDDPLQATERALEMVLEGKVTAINGKEIPIVAHSICVHGDNPKAVELASSIRKQLEKAHVEVVELTYVLKAAYS.

This sequence belongs to the LamB/PxpA family. In terms of assembly, forms a complex composed of PxpA, PxpB and PxpC.

The catalysed reaction is 5-oxo-L-proline + ATP + 2 H2O = L-glutamate + ADP + phosphate + H(+). In terms of biological role, catalyzes the cleavage of 5-oxoproline to form L-glutamate coupled to the hydrolysis of ATP to ADP and inorganic phosphate. The protein is 5-oxoprolinase subunit A of Coprothermobacter proteolyticus (strain ATCC 35245 / DSM 5265 / OCM 4 / BT).